Here is a 341-residue protein sequence, read N- to C-terminus: Ketol-acid reductoisomerase (NADP(+)) (341 aa).

One can recognise a KARI N-terminal Rossmann domain in the interval 2 to 181 (AKVYYNGDAN…GAARAGVLET (180 aa)). NADP(+) is bound by residues 25–28 (YGSQ), Arg-48, Ser-52, and 82–85 (DEKQ). His-107 is an active-site residue. Gly-133 contacts NADP(+). The 146-residue stretch at 182–327 (TFKEETETDL…RELRSMMPFV (146 aa)) folds into the KARI C-terminal knotted domain. Mg(2+) contacts are provided by Asp-190, Glu-194, Glu-226, and Glu-230. Ser-251 is a binding site for substrate.

Belongs to the ketol-acid reductoisomerase family. Mg(2+) serves as cofactor.

The catalysed reaction is (2R)-2,3-dihydroxy-3-methylbutanoate + NADP(+) = (2S)-2-acetolactate + NADPH + H(+). It carries out the reaction (2R,3R)-2,3-dihydroxy-3-methylpentanoate + NADP(+) = (S)-2-ethyl-2-hydroxy-3-oxobutanoate + NADPH + H(+). Its pathway is amino-acid biosynthesis; L-isoleucine biosynthesis; L-isoleucine from 2-oxobutanoate: step 2/4. It functions in the pathway amino-acid biosynthesis; L-valine biosynthesis; L-valine from pyruvate: step 2/4. Its function is as follows. Involved in the biosynthesis of branched-chain amino acids (BCAA). Catalyzes an alkyl-migration followed by a ketol-acid reduction of (S)-2-acetolactate (S2AL) to yield (R)-2,3-dihydroxy-isovalerate. In the isomerase reaction, S2AL is rearranged via a Mg-dependent methyl migration to produce 3-hydroxy-3-methyl-2-ketobutyrate (HMKB). In the reductase reaction, this 2-ketoacid undergoes a metal-dependent reduction by NADPH to yield (R)-2,3-dihydroxy-isovalerate. This Geobacillus kaustophilus (strain HTA426) protein is Ketol-acid reductoisomerase (NADP(+)).